We begin with the raw amino-acid sequence, 515 residues long: 2-isopropylmalate synthase (515 aa).

The 263-residue stretch at 5-267 folds into the Pyruvate carboxyltransferase domain; that stretch reads VIIFDTTLRD…DTRINTQEIH (263 aa). Residues Asp-14, His-202, His-204, and Asn-238 each coordinate Mn(2+). Positions 392 to 515 are regulatory domain; the sequence is VLDKLSAHST…VADIKSHKHH (124 aa).

The protein belongs to the alpha-IPM synthase/homocitrate synthase family. LeuA type 1 subfamily. As to quaternary structure, homodimer. Requires Mn(2+) as cofactor.

The protein localises to the cytoplasm. The enzyme catalyses 3-methyl-2-oxobutanoate + acetyl-CoA + H2O = (2S)-2-isopropylmalate + CoA + H(+). The protein operates within amino-acid biosynthesis; L-leucine biosynthesis; L-leucine from 3-methyl-2-oxobutanoate: step 1/4. In terms of biological role, catalyzes the condensation of the acetyl group of acetyl-CoA with 3-methyl-2-oxobutanoate (2-ketoisovalerate) to form 3-carboxy-3-hydroxy-4-methylpentanoate (2-isopropylmalate). The chain is 2-isopropylmalate synthase from Haemophilus influenzae (strain 86-028NP).